Consider the following 414-residue polypeptide: WW domain-containing oxidoreductase (414 aa).

The interval 1 to 23 (MAALRYAGLDDTDSEDELPPGWE) is disordered. Threonine 12 carries the post-translational modification Phosphothreonine. Position 14 is a phosphoserine (serine 14). The WW 1 domain occupies 16–49 (DELPPGWEERTTKDGWVYYANHTEEKTQWEHPKT). Position 33 is a phosphotyrosine (tyrosine 33). The Nuclear localization signal motif lies at 50–55 (GKRKRV). In terms of domain architecture, WW 2 spans 57–90 (GDLPYGWEQETDENGQVFFVDHINKRTTYLDPRL). The interval 125-414 (KVVVVTGANS…IQERLGSQSG (290 aa)) is interaction with MAPT. 131-137 (GANSGIG) serves as a coordination point for NADP(+). The interval 209-273 (CNAATFALPW…RFTDINDSLG (65 aa)) is mediates targeting to the mitochondria. Serine 260 is a binding site for substrate. Tyrosine 287 bears the Phosphotyrosine; by TNK2 mark. Residue tyrosine 293 is the Proton acceptor of the active site.

The protein belongs to the short-chain dehydrogenases/reductases (SDR) family. Interacts with TP53, p73/TP73 and MAPK8. Interacts with MAPT/TAU, RUNX2 and HYAL2. Forms a ternary complex with TP53 and MDM2. Interacts with ERBB4, LITAF and WBP1. Interacts with DVL1, DVL2 and DVL3. May interact with FAM189B and SCOTIN. Interacts with TNK2. Interacts with TMEM207. Interacts (via WW domain) with VOPP1. In terms of processing, phosphorylated upon genotoxic stress. Phosphorylation of Tyr-33 regulates interaction with TP53, TP73 and MAPK8. May also regulate proapoptotic activity. Phosphorylation by TNK2 is associated with polyubiquitination and degradation. Post-translationally, ubiquitinated when phosphorylated by TNK2, leading to its degradation. In terms of tissue distribution, widely expressed. Strongly expressed in testis, prostate, and ovary. Overexpressed in cancer cell lines. Isoform 5 and isoform 6 may only be expressed in tumor cell lines.

It localises to the cytoplasm. Its subcellular location is the nucleus. It is found in the mitochondrion. The protein resides in the golgi apparatus. The protein localises to the lysosome. Functionally, putative oxidoreductase. Acts as a tumor suppressor and plays a role in apoptosis. Required for normal bone development. May function synergistically with p53/TP53 to control genotoxic stress-induced cell death. Plays a role in TGFB1 signaling and TGFB1-mediated cell death. May also play a role in tumor necrosis factor (TNF)-mediated cell death. Inhibits Wnt signaling, probably by sequestering DVL2 in the cytoplasm. The protein is WW domain-containing oxidoreductase (WWOX) of Homo sapiens (Human).